A 74-amino-acid polypeptide reads, in one-letter code: Putative defensin-like protein 12 (74 aa).

An N-terminal signal peptide occupies residues M1–C26. Cystine bridges form between C26/C50, C33/C59, and C39/C61.

Belongs to the DEFL family.

The protein localises to the secreted. The protein is Putative defensin-like protein 12 of Arabidopsis thaliana (Mouse-ear cress).